A 449-amino-acid chain; its full sequence is UDP-glycosyltransferase 76E6 (449 aa).

UDP-alpha-D-glucose contacts are provided by residues S274, 333 to 335 (APQ), 350 to 358 (HCGWNSTLE), and 372 to 375 (HGEQ).

The protein belongs to the UDP-glycosyltransferase family.

This chain is UDP-glycosyltransferase 76E6 (UGT76E6), found in Arabidopsis thaliana (Mouse-ear cress).